The primary structure comprises 818 residues: H(+)/Cl(-) exchange transporter 3 (818 aa).

Residues 1-125 (MESEQLFHRG…WEMTKSLYDA (125 aa)) lie on the Cytoplasmic side of the membrane. 3 short sequence motifs (di-leucine internalization motif; mediates targeting to late endosome and lysosome membranes) span residues 28 to 29 (LL), 46 to 47 (LL), and 71 to 75 (LLDLL). The chain crosses the membrane as a helical span at residues 126–163 (WSGWLVVTLTGLASGALAGLIDIAADWMTDLKEGICLS). Residue asparagine 177 is glycosylated (N-linked (GlcNAc...) asparagine). A helical transmembrane segment spans residues 209-232 (MNYIMYIFWALSFAFLAVSLVKVF). Positions 238-242 (GSGIP) match the Selectivity filter part_1 motif. Serine 239 is a chloride binding site. An intramembrane region (helical) is located at residues 241-248 (IPEIKTIL). 2 helical membrane-spanning segments follow: residues 258–276 (GKWTLMIKTITLVLAVASG) and 282–301 (EGPLVHVACCCGNIFSYLFP). The short motif at 280-284 (GKEGP) is the Selectivity filter part_2 element. 2 intramembrane regions (helical) span residues 313–325 (VLSAASAAGVSVA) and 329–337 (PIGGVLFSL). A run of 3 helical transmembrane segments spans residues 349-367 (LWRSFFAALVAAFVLRSIN), 391-416 (FPFILLGVFGGLWGAFFIRANIAWCR), and 423-443 (FGKYPVLEVIIVAAITAVIAF). Asparagine 451 and asparagine 479 each carry an N-linked (GlcNAc...) asparagine glycan. The next 2 membrane-spanning stretches (helical) occupy residues 500-520 (IWQLCLALIFKIIMTVFTFGI) and 525-544 (GLFIPSMAIGAIAGRIVGIA). The Selectivity filter part_3 signature appears at 525–529 (GLFIP). Phenylalanine 527 is a binding site for chloride. Intramembrane regions (helical) lie at residues 572 to 586 (GLYAMVGAAACLGGV) and 590 to 601 (TVSLVVIVFELT). The segment at residues 602-605 (GGLE) is an intramembrane region (note=Loop between two helices). The chain crosses the membrane as a helical span at residues 606-624 (YIVPLMAAVMTSKWVGDAF). The Cytoplasmic portion of the chain corresponds to 625–818 (GREGIYEAHI…NQDPASIMFN (194 aa)). Tyrosine 630 contributes to the chloride binding site. 2 consecutive CBS domains span residues 658 to 722 (MRPR…ARKK) and 755 to 812 (LDMS…NQDP). ATP contacts are provided by residues 689–691 (YNG) and 796–799 (TKKD).

The protein belongs to the chloride channel (TC 2.A.49) family. ClC-3/CLCN3 subfamily. In terms of assembly, monomer and homodimer. Forms heterodimers with CLCN4. Interacts with GOPC, PDZK1 and NHERF1/EBP50. Post-translationally, N-glycosylated. In terms of tissue distribution, expressed primarily in tissues derived from neuroectoderm. Within the brain, its expression is particularly evident in the hippocampus, olfactory cortex, and olfactory bulb. Highly expressed in aortic and coronary vascular smooth muscle cells, and aortic endothelial cells. Also expressed in tracheal and alveolar epithelial cells, and intima and media of the pulmonary vessels. Expressed in bronchus and colon (at protein level).

It localises to the early endosome membrane. The protein resides in the late endosome membrane. Its subcellular location is the lysosome membrane. It is found in the cell membrane. The protein localises to the golgi apparatus membrane. It localises to the cell projection. The protein resides in the ruffle membrane. Functionally, strongly outwardly rectifying, electrogenic H(+)/Cl(-)exchanger which mediates the exchange of chloride ions against protons. The CLC channel family contains both chloride channels and proton-coupled anion transporters that exchange chloride or another anion for protons. The presence of conserved gating glutamate residues is typical for family members that function as antiporters. In terms of biological role, strongly outwardly rectifying, electrogenic H(+)/Cl(-)exchanger which mediates the exchange of chloride ions against protons. The polypeptide is H(+)/Cl(-) exchange transporter 3 (CLCN3) (Homo sapiens (Human)).